The sequence spans 541 residues: Chaperonin GroEL (541 aa).

Residues 29–32, lysine 50, 86–90, glycine 416, and aspartate 498 contribute to the ATP site; these read TAGP and DGTTT.

It belongs to the chaperonin (HSP60) family. In terms of assembly, forms a cylinder of 14 subunits composed of two heptameric rings stacked back-to-back. Interacts with the co-chaperonin GroES.

Its subcellular location is the cytoplasm. The catalysed reaction is ATP + H2O + a folded polypeptide = ADP + phosphate + an unfolded polypeptide.. Its function is as follows. Together with its co-chaperonin GroES, plays an essential role in assisting protein folding. The GroEL-GroES system forms a nano-cage that allows encapsulation of the non-native substrate proteins and provides a physical environment optimized to promote and accelerate protein folding. The sequence is that of Chaperonin GroEL from Anaplasma phagocytophilum (Ehrlichia phagocytophila).